Reading from the N-terminus, the 111-residue chain is UPF0145 protein Bphy_3680 (111 aa).

The protein belongs to the UPF0145 family.

This chain is UPF0145 protein Bphy_3680, found in Paraburkholderia phymatum (strain DSM 17167 / CIP 108236 / LMG 21445 / STM815) (Burkholderia phymatum).